A 149-amino-acid chain; its full sequence is Transthyretin (149 aa).

The signal sequence occupies residues 1 to 22; that stretch reads MAFHSLLLLCLAGLAFVSETAA. Residue Cys-32 is modified to Sulfocysteine. Residue Lys-37 coordinates L-thyroxine. 4-carboxyglutamate is present on Glu-64. Glu-76 and Ser-139 together coordinate L-thyroxine.

This sequence belongs to the transthyretin family. In terms of assembly, homotetramer. Dimer of dimers. In the homotetramer, subunits assemble around a central channel that can accommodate two ligand molecules. Interacts with RBP4. In terms of processing, sulfonation of the reactive cysteine Cys-32 enhances the stability of the native conformation of TTR, avoiding misassembly of the protein leading to amyloid formation. As to expression, detected in liver.

The protein resides in the secreted. Its function is as follows. Thyroid hormone-binding protein. Probably transports thyroxine from the bloodstream to the brain. The polypeptide is Transthyretin (TTR) (Macropus giganteus (Eastern gray kangaroo)).